A 274-amino-acid chain; its full sequence is Penicillin-insensitive murein endopeptidase (274 aa).

The N-terminal stretch at 1–19 (MNKTAIALLALLASSASLA) is a signal peptide. 3 cysteine pairs are disulfide-bonded: Cys44–Cys265, Cys187–Cys235, and Cys216–Cys223. His110, His113, Asp120, Asp147, His150, and His211 together coordinate Zn(2+). A disordered region spans residues 227 to 274 (PLPPPGDGCGAELQSWFEPPKPGTTKPEKKTPPPLPPSCQALLDEHVI).

Belongs to the peptidase M74 family. Dimer. It depends on Zn(2+) as a cofactor.

Its subcellular location is the periplasm. Murein endopeptidase that cleaves the D-alanyl-meso-2,6-diamino-pimelyl amide bond that connects peptidoglycan strands. Likely plays a role in the removal of murein from the sacculus. The polypeptide is Penicillin-insensitive murein endopeptidase (Escherichia coli O17:K52:H18 (strain UMN026 / ExPEC)).